Here is a 225-residue protein sequence, read N- to C-terminus: Protein NrfC homolog (225 aa).

Positions 1-28 (MTVCSRRNFVSGMGAVILMTGTSLPAFA) form a signal peptide, tat-type signal. 4Fe-4S ferredoxin-type domains are found at residues 39–67 (YAMI…VPEG), 85–116 (QEYE…IDKE), and 118–147 (GIVD…IHPI). Residues cysteine 48, cysteine 51, cysteine 54, cysteine 58, cysteine 94, cysteine 97, cysteine 102, cysteine 106, cysteine 127, cysteine 130, cysteine 133, cysteine 137, cysteine 154, cysteine 157, cysteine 170, and cysteine 174 each contribute to the [4Fe-4S] cluster site.

In terms of processing, predicted to be exported by the Tat system. The position of the signal peptide cleavage has not been experimentally proven.

Its function is as follows. Probably involved in the transfer of electrons from the quinone pool to the type-c cytochromes. This Haemophilus influenzae (strain ATCC 51907 / DSM 11121 / KW20 / Rd) protein is Protein NrfC homolog (nrfC).